A 281-amino-acid polypeptide reads, in one-letter code: Nucleotide-binding protein Tpet_1006 (281 aa).

Residue 9-16 (GLSGAGKT) coordinates ATP. Position 58–61 (58–61 (DVRS)) interacts with GTP.

It belongs to the RapZ-like family.

Functionally, displays ATPase and GTPase activities. The protein is Nucleotide-binding protein Tpet_1006 of Thermotoga petrophila (strain ATCC BAA-488 / DSM 13995 / JCM 10881 / RKU-1).